The sequence spans 432 residues: Trigger factor (432 aa).

The 86-residue stretch at 163 to 248 (GDIAVIDFEG…LKALNKKELP (86 aa)) folds into the PPIase FKBP-type domain.

The protein belongs to the FKBP-type PPIase family. Tig subfamily.

The protein localises to the cytoplasm. The catalysed reaction is [protein]-peptidylproline (omega=180) = [protein]-peptidylproline (omega=0). In terms of biological role, involved in protein export. Acts as a chaperone by maintaining the newly synthesized protein in an open conformation. Functions as a peptidyl-prolyl cis-trans isomerase. In Caldanaerobacter subterraneus subsp. tengcongensis (strain DSM 15242 / JCM 11007 / NBRC 100824 / MB4) (Thermoanaerobacter tengcongensis), this protein is Trigger factor.